A 111-amino-acid chain; its full sequence is Cytochrome c2 (111 aa).

The heme c site is built by cysteine 14, cysteine 17, histidine 18, and methionine 83.

The protein belongs to the cytochrome c family. Binds 1 heme c group covalently per subunit.

In terms of biological role, cytochrome c2 is found mainly in purple, non-sulfur, photosynthetic bacteria where it functions as the electron donor to the oxidized bacteriochlorophyll in the photophosphorylation pathway. However, it may also have a role in the respiratory chain and is found in some non-photosynthetic bacteria. In Agrobacterium tumefaciens (strain II Chrys), this protein is Cytochrome c2.